A 140-amino-acid polypeptide reads, in one-letter code: Large ribosomal subunit protein uL13 (140 aa).

In terms of assembly, part of the 50S ribosomal subunit.

In terms of biological role, this protein is one of the early assembly proteins of the 50S ribosomal subunit, although it is not seen to bind rRNA by itself. It is important during the early stages of 50S assembly. This chain is Large ribosomal subunit protein uL13, found in Thermus thermophilus (strain ATCC 27634 / DSM 579 / HB8).